Reading from the N-terminus, the 174-residue chain is 16S rRNA aminocarboxypropyltransferase (174 aa).

Residues Thr-26, Leu-73, Leu-97, and Ser-116 each contribute to the S-adenosyl-L-methionine site.

Belongs to the TDD superfamily. TSR3 family.

It localises to the cytoplasm. It catalyses the reaction an N(1)-methylpseudouridine in rRNA + S-adenosyl-L-methionine = N(1)-methyl-N(3)-[(3S)-3-amino-3-carboxypropyl]pseudouridine in rRNA + S-methyl-5'-thioadenosine + H(+). Aminocarboxypropyltransferase that catalyzes the aminocarboxypropyl transfer on pseudouridine corresponding to position 914 in M.jannaschii 16S rRNA. It constitutes the last step in biosynthesis of the hypermodified N1-methyl-N3-(3-amino-3-carboxypropyl) pseudouridine (m1acp3-Psi). This is 16S rRNA aminocarboxypropyltransferase from Methanosarcina acetivorans (strain ATCC 35395 / DSM 2834 / JCM 12185 / C2A).